Here is a 131-residue protein sequence, read N- to C-terminus: Small ribosomal subunit protein uS8 (131 aa).

This sequence belongs to the universal ribosomal protein uS8 family. Part of the 30S ribosomal subunit. Contacts proteins S5 and S12.

Functionally, one of the primary rRNA binding proteins, it binds directly to 16S rRNA central domain where it helps coordinate assembly of the platform of the 30S subunit. This is Small ribosomal subunit protein uS8 from Burkholderia mallei (strain NCTC 10247).